A 351-amino-acid polypeptide reads, in one-letter code: Dihydroorotate dehydrogenase (quinone) (351 aa).

FMN-binding positions include 61–65 (AGLDK) and Thr85. Lys65 is a binding site for substrate. A substrate-binding site is contributed by 110-114 (NRMGF). Residues Asn139 and Asn172 each coordinate FMN. Asn172 serves as a coordination point for substrate. The active-site Nucleophile is Ser175. Asn177 lines the substrate pocket. FMN is bound by residues Lys217 and Thr245. A substrate-binding site is contributed by 246 to 247 (NT). FMN-binding positions include Gly268, Gly297, and 318-319 (YS).

Belongs to the dihydroorotate dehydrogenase family. Type 2 subfamily. As to quaternary structure, monomer. The cofactor is FMN.

Its subcellular location is the cell membrane. It carries out the reaction (S)-dihydroorotate + a quinone = orotate + a quinol. It participates in pyrimidine metabolism; UMP biosynthesis via de novo pathway; orotate from (S)-dihydroorotate (quinone route): step 1/1. Its function is as follows. Catalyzes the conversion of dihydroorotate to orotate with quinone as electron acceptor. The sequence is that of Dihydroorotate dehydrogenase (quinone) from Xanthomonas campestris pv. campestris (strain 8004).